The primary structure comprises 196 residues: Endonuclease V (196 aa).

Mg(2+)-binding residues include D37 and D98.

The protein belongs to the endonuclease V family. The cofactor is Mg(2+).

Its subcellular location is the cytoplasm. The catalysed reaction is Endonucleolytic cleavage at apurinic or apyrimidinic sites to products with a 5'-phosphate.. Functionally, DNA repair enzyme involved in the repair of deaminated bases. Selectively cleaves double-stranded DNA at the second phosphodiester bond 3' to a deoxyinosine leaving behind the intact lesion on the nicked DNA. This is Endonuclease V from Sulfolobus acidocaldarius (strain ATCC 33909 / DSM 639 / JCM 8929 / NBRC 15157 / NCIMB 11770).